The following is a 295-amino-acid chain: Mediator of RNA polymerase II transcription subunit 27 (295 aa).

It belongs to the Mediator complex subunit 27 family. Component of the Mediator complex.

It localises to the nucleus. Functionally, component of the Mediator complex, a coactivator involved in the regulated transcription of nearly all RNA polymerase II-dependent genes. Mediator functions as a bridge to convey information from gene-specific regulatory proteins to the basal RNA polymerase II transcription machinery. Mediator is recruited to promoters by direct interactions with regulatory proteins and serves as a scaffold for the assembly of a functional preinitiation complex with RNA polymerase II and the general transcription factors. In Anopheles gambiae (African malaria mosquito), this protein is Mediator of RNA polymerase II transcription subunit 27 (MED27).